A 177-amino-acid polypeptide reads, in one-letter code: Large ribosomal subunit protein uL10 (177 aa).

The protein belongs to the universal ribosomal protein uL10 family. In terms of assembly, part of the ribosomal stalk of the 50S ribosomal subunit. The N-terminus interacts with L11 and the large rRNA to form the base of the stalk. The C-terminus forms an elongated spine to which L12 dimers bind in a sequential fashion forming a multimeric L10(L12)X complex.

Its function is as follows. Forms part of the ribosomal stalk, playing a central role in the interaction of the ribosome with GTP-bound translation factors. This chain is Large ribosomal subunit protein uL10, found in Kocuria rhizophila (strain ATCC 9341 / DSM 348 / NBRC 103217 / DC2201).